The primary structure comprises 182 residues: Sec-independent protein translocase protein TatB (182 aa).

Residues 1–21 (MFDIGFSELLLVFVIGLIVLG) form a helical membrane-spanning segment. Disordered stretches follow at residues 88-107 (AAES…ASDE) and 121-182 (TQHE…SDKP). Low complexity predominate over residues 168–182 (AAPVVESSPSSSDKP).

Belongs to the TatB family. The Tat system comprises two distinct complexes: a TatABC complex, containing multiple copies of TatA, TatB and TatC subunits, and a separate TatA complex, containing only TatA subunits. Substrates initially bind to the TatABC complex, which probably triggers association of the separate TatA complex to form the active translocon.

The protein resides in the cell inner membrane. Its function is as follows. Part of the twin-arginine translocation (Tat) system that transports large folded proteins containing a characteristic twin-arginine motif in their signal peptide across membranes. Together with TatC, TatB is part of a receptor directly interacting with Tat signal peptides. TatB may form an oligomeric binding site that transiently accommodates folded Tat precursor proteins before their translocation. The chain is Sec-independent protein translocase protein TatB from Salmonella typhi.